The primary structure comprises 349 residues: MDIKTALSRIVGHLDLSTAEMSDVMREIMTGQCTDAQIGAFMMAMRMKSESIDEIVGAVSVMRELADKVELKTLDGVVDVVGTGGDGANIFNVSTASSFVVAAAGCTVAKHGNRAVSGKSGSADLLEAAGIYLNLTPVQVARCIDNVGIGFMFAQSHHGAMKHAAGPRKDLGLRTLFNMLGPLTNPAGVKHQVVGVFSQALCRPLAEVLQRMGSKHVLVVHSKDGLDEFSLAAPTFVAELKNDQITEYWVEPEDLGMKSQSLHGLAVESPAASLELIRDALGRRKTENGQKAAEMIVLNAGAALYAADHAYSLKEGVALAHDALHTGLAREKLEELGAFTAVFKMENEG.

5-phospho-alpha-D-ribose 1-diphosphate contacts are provided by residues G82, G85 to D86, N92 to T95, K110 to G118, and S122. G82 serves as a coordination point for anthranilate. Position 94 (S94) interacts with Mg(2+). Anthranilate is bound at residue N113. R168 is a binding site for anthranilate. Residues D227 and E228 each coordinate Mg(2+).

It belongs to the anthranilate phosphoribosyltransferase family. As to quaternary structure, homodimer. It depends on Mg(2+) as a cofactor.

It catalyses the reaction N-(5-phospho-beta-D-ribosyl)anthranilate + diphosphate = 5-phospho-alpha-D-ribose 1-diphosphate + anthranilate. The protein operates within amino-acid biosynthesis; L-tryptophan biosynthesis; L-tryptophan from chorismate: step 2/5. Catalyzes the transfer of the phosphoribosyl group of 5-phosphorylribose-1-pyrophosphate (PRPP) to anthranilate to yield N-(5'-phosphoribosyl)-anthranilate (PRA). In Pseudomonas fluorescens (strain SBW25), this protein is Anthranilate phosphoribosyltransferase.